A 110-amino-acid chain; its full sequence is PHD finger-like domain-containing protein 5B (110 aa).

The protein belongs to the PHF5 family.

This is PHD finger-like domain-containing protein 5B from Arabidopsis thaliana (Mouse-ear cress).